A 309-amino-acid chain; its full sequence is Homoserine kinase (309 aa).

91–101 (PIGSGLGSSAC) provides a ligand contact to ATP.

This sequence belongs to the GHMP kinase family. Homoserine kinase subfamily.

The protein localises to the cytoplasm. The catalysed reaction is L-homoserine + ATP = O-phospho-L-homoserine + ADP + H(+). Its pathway is amino-acid biosynthesis; L-threonine biosynthesis; L-threonine from L-aspartate: step 4/5. Functionally, catalyzes the ATP-dependent phosphorylation of L-homoserine to L-homoserine phosphate. This Klebsiella pneumoniae (strain 342) protein is Homoserine kinase.